A 192-amino-acid chain; its full sequence is NADH dehydrogenase [ubiquinone] iron-sulfur protein 3 (192 aa).

The protein belongs to the complex I 30 kDa subunit family. In terms of assembly, complex I is composed of about 45 different subunits. This is a component of the iron-sulfur (IP) fragment of the enzyme.

The protein resides in the mitochondrion inner membrane. It catalyses the reaction a ubiquinone + NADH + 5 H(+)(in) = a ubiquinol + NAD(+) + 4 H(+)(out). Its function is as follows. Core subunit of the mitochondrial membrane respiratory chain NADH dehydrogenase (Complex I) that is believed to belong to the minimal assembly required for catalysis. Complex I functions in the transfer of electrons from NADH to the respiratory chain. The immediate electron acceptor for the enzyme is believed to be ubiquinone. The protein is NADH dehydrogenase [ubiquinone] iron-sulfur protein 3 (NAD9) of Beta trigyna (Caucasian wild beet).